Here is a 496-residue protein sequence, read N- to C-terminus: Cytosol aminopeptidase (496 aa).

2 residues coordinate Mn(2+): Lys-258 and Asp-263. Lys-270 is a catalytic residue. Mn(2+) is bound by residues Asp-281, Asp-340, and Glu-342. Residue Arg-344 is part of the active site.

It belongs to the peptidase M17 family. Mn(2+) is required as a cofactor.

The protein resides in the cytoplasm. It catalyses the reaction Release of an N-terminal amino acid, Xaa-|-Yaa-, in which Xaa is preferably Leu, but may be other amino acids including Pro although not Arg or Lys, and Yaa may be Pro. Amino acid amides and methyl esters are also readily hydrolyzed, but rates on arylamides are exceedingly low.. The catalysed reaction is Release of an N-terminal amino acid, preferentially leucine, but not glutamic or aspartic acids.. Functionally, presumably involved in the processing and regular turnover of intracellular proteins. Catalyzes the removal of unsubstituted N-terminal amino acids from various peptides. This chain is Cytosol aminopeptidase (pepA), found in Helicobacter pylori (strain J99 / ATCC 700824) (Campylobacter pylori J99).